Consider the following 349-residue polypeptide: Green-sensitive opsin-1 (349 aa).

Residues 1–36 (MNGTEGKNFYVPMSNRTGLVRSPFEYPQYYLAEPWQ) lie on the Extracellular side of the membrane. 2 N-linked (GlcNAc...) asparagine glycosylation sites follow: Asn-2 and Asn-15. The helical transmembrane segment at 37–61 (FKILALYLFFLMSMGLPINGLTLVV) threads the bilayer. Topologically, residues 62 to 73 (TAQHKKLRQPLN) are cytoplasmic. Residues 74–99 (FILVNLAVAGTIMVCFGFTVTFYTAI) form a helical membrane-spanning segment. The Extracellular segment spans residues 100-113 (NGYFVLGPTGCAVE). A disulfide bridge connects residues Cys-110 and Cys-187. A helical transmembrane segment spans residues 114–133 (GFMATLGGEVALWSLVVLAI). The Cytoplasmic segment spans residues 134-152 (ERYIVVCKPMGSFKFSSSH). The helical transmembrane segment at 153-176 (AFAGIAFTWVMALACAAPPLFGWS) threads the bilayer. Topologically, residues 177–202 (RYIPEGMQCSCGPDYYTLNPDYNNES) are extracellular. A helical membrane pass occupies residues 203–230 (YVIYMFVCHFILPVAVIFFTYGRLVCTV). The Cytoplasmic segment spans residues 231–252 (KAAAAQQQDSASTQKAEREVTK). A helical transmembrane segment spans residues 253 to 276 (MVILMVFGFLIAWTPYATVAAWIF). At 277-284 (FNKGADFS) the chain is on the extracellular side. The chain crosses the membrane as a helical span at residues 285-309 (AKFMAIPAFFSKSSALYNPVIYVLL). At Lys-296 the chain carries N6-(retinylidene)lysine. Over 310–349 (NKQFRNCMLTTIFCGKNPLGDDESSTVSTSKTEVSSVSPA) the chain is Cytoplasmic. Positions 329–349 (GDDESSTVSTSKTEVSSVSPA) are disordered. Residues 334 to 349 (STVSTSKTEVSSVSPA) show a composition bias toward low complexity.

This sequence belongs to the G-protein coupled receptor 1 family. Opsin subfamily. Phosphorylated on some or all of the serine and threonine residues present in the C-terminal region. The color pigments are found in the cone photoreceptor cells.

It localises to the membrane. In terms of biological role, visual pigments are the light-absorbing molecules that mediate vision. They consist of an apoprotein, opsin, covalently linked to cis-retinal. The chain is Green-sensitive opsin-1 from Carassius auratus (Goldfish).